The sequence spans 305 residues: GMP synthase [glutamine-hydrolyzing] subunit B (305 aa).

The GMPS ATP-PPase domain maps to 2 to 184 (VKPEKFIPKA…LQLPEEICER (183 aa)). Residue 29 to 35 (SGGVDSS) coordinates ATP.

Heterodimer composed of a glutamine amidotransferase subunit (A) and a GMP-binding subunit (B).

It carries out the reaction XMP + L-glutamine + ATP + H2O = GMP + L-glutamate + AMP + diphosphate + 2 H(+). It participates in purine metabolism; GMP biosynthesis; GMP from XMP (L-Gln route): step 1/1. Catalyzes the synthesis of GMP from XMP. This is GMP synthase [glutamine-hydrolyzing] subunit B (guaAB) from Methanosarcina acetivorans (strain ATCC 35395 / DSM 2834 / JCM 12185 / C2A).